Consider the following 172-residue polypeptide: uncharacterized protein (172 aa).

Helical transmembrane passes span 1-21 (MLFI…SLSI), 41-61 (NSTL…IEAN), 72-92 (QIGL…IYEL), and 136-156 (FCQA…ILAV).

The protein resides in the cell membrane. This is an uncharacterized protein from Haemophilus influenzae (strain ATCC 51907 / DSM 11121 / KW20 / Rd).